The sequence spans 77 residues: Acyl carrier protein (77 aa).

The region spanning 1–76 (MSIEERVKKI…SAIDYVTKAN (76 aa)) is the Carrier domain. The residue at position 36 (serine 36) is an O-(pantetheine 4'-phosphoryl)serine.

It belongs to the acyl carrier protein (ACP) family. Post-translationally, 4'-phosphopantetheine is transferred from CoA to a specific serine of apo-ACP by AcpS. This modification is essential for activity because fatty acids are bound in thioester linkage to the sulfhydryl of the prosthetic group.

Its subcellular location is the cytoplasm. The protein operates within lipid metabolism; fatty acid biosynthesis. Functionally, carrier of the growing fatty acid chain in fatty acid biosynthesis. The polypeptide is Acyl carrier protein (Actinobacillus pleuropneumoniae serotype 5b (strain L20)).